The sequence spans 508 residues: Small ribosomal subunit protein mS47 (508 aa).

Belongs to the enoyl-CoA hydratase/isomerase family. Mitochondrion-specific ribosomal protein mS47 subfamily. In terms of assembly, component of the mitochondrial small ribosomal subunit (mt-SSU). Mature N.crassa 74S mitochondrial ribosomes consist of a small (37S) and a large (54S) subunit. The 37S small subunit contains a 16S ribosomal RNA (16S mt-rRNA) and 32 different proteins. The 54S large subunit contains a 23S rRNA (23S mt-rRNA) and 42 different proteins. mS47 forms a protuberance of the N.crassa mitoribosome and retains a solvent-exposed cavity liekly capable of accommodating a substrate, in accordance with it being an active enzyme as well as an integral constituent of the mitoribosome.

Its subcellular location is the mitochondrion. It carries out the reaction 3-hydroxy-2-methylpropanoyl-CoA + H2O = 3-hydroxy-2-methylpropanoate + CoA + H(+). Functionally, component of the mitochondrial ribosome (mitoribosome), a dedicated translation machinery responsible for the synthesis of mitochondrial genome-encoded proteins, including at least some of the essential transmembrane subunits of the mitochondrial respiratory chain. The mitoribosomes are attached to the mitochondrial inner membrane and translation products are cotranslationally integrated into the membrane. mS47 has enzymatic activity in vitro, and is able to catalyze the specific hydrolysis of 3-hydroxyisobutyryl-CoA (HIBYL-CoA). However, because the turnover rate of mS47 is only a fraction of that of the homologous mammalian enzyme, the physiological function of this activity remains unclear. The sequence is that of Small ribosomal subunit protein mS47 (ehd3) from Neurospora crassa (strain ATCC 24698 / 74-OR23-1A / CBS 708.71 / DSM 1257 / FGSC 987).